Consider the following 62-residue polypeptide: Photosystem II reaction center protein Z (62 aa).

A run of 2 helical transmembrane segments spans residues 8–28 (AVFA…VVFA) and 41–61 (FSGT…NSLI).

It belongs to the PsbZ family. In terms of assembly, PSII is composed of 1 copy each of membrane proteins PsbA, PsbB, PsbC, PsbD, PsbE, PsbF, PsbH, PsbI, PsbJ, PsbK, PsbL, PsbM, PsbT, PsbY, PsbZ, Psb30/Ycf12, at least 3 peripheral proteins of the oxygen-evolving complex and a large number of cofactors. It forms dimeric complexes.

Its subcellular location is the plastid. The protein resides in the chloroplast thylakoid membrane. Its function is as follows. May control the interaction of photosystem II (PSII) cores with the light-harvesting antenna, regulates electron flow through the 2 photosystem reaction centers. PSII is a light-driven water plastoquinone oxidoreductase, using light energy to abstract electrons from H(2)O, generating a proton gradient subsequently used for ATP formation. The protein is Photosystem II reaction center protein Z of Calycanthus floridus var. glaucus (Eastern sweetshrub).